Consider the following 305-residue polypeptide: Acetyl-coenzyme A carboxylase carboxyl transferase subunit beta (305 aa).

Residues 23–292 enclose the CoA carboxyltransferase N-terminal domain; sequence GWLKCTHCNE…EENEPSPPPK (270 aa). Zn(2+) contacts are provided by Cys-27, Cys-30, Cys-46, and Cys-49. The segment at 27-49 adopts a C4-type zinc-finger fold; it reads CTHCNELIHANELEQNSNCCPKC. The disordered stretch occupies residues 281-305; sequence FSEENEPSPPPKNLIKKTSPLKDKN.

The protein belongs to the AccD/PCCB family. Acetyl-CoA carboxylase is a heterohexamer composed of biotin carboxyl carrier protein (AccB), biotin carboxylase (AccC) and two subunits each of ACCase subunit alpha (AccA) and ACCase subunit beta (AccD). Requires Zn(2+) as cofactor.

The protein localises to the cytoplasm. It catalyses the reaction N(6)-carboxybiotinyl-L-lysyl-[protein] + acetyl-CoA = N(6)-biotinyl-L-lysyl-[protein] + malonyl-CoA. It participates in lipid metabolism; malonyl-CoA biosynthesis; malonyl-CoA from acetyl-CoA: step 1/1. Functionally, component of the acetyl coenzyme A carboxylase (ACC) complex. Biotin carboxylase (BC) catalyzes the carboxylation of biotin on its carrier protein (BCCP) and then the CO(2) group is transferred by the transcarboxylase to acetyl-CoA to form malonyl-CoA. In Protochlamydia amoebophila (strain UWE25), this protein is Acetyl-coenzyme A carboxylase carboxyl transferase subunit beta.